Reading from the N-terminus, the 349-residue chain is Interleukin-10 receptor subunit beta (349 aa).

Residues 1–19 (MAPCVAGWLGGFLLVPALG) form the signal peptide. Over 20 to 220 (MIPPPEKVRM…RTGNDEITPS (201 aa)) the chain is Extracellular. Fibronectin type-III domains lie at 23–111 (PPEK…VEDT) and 112–215 (IIGP…TGND). N49 is a glycosylation site (N-linked (GlcNAc...) asparagine). The cysteines at positions 66 and 74 are disulfide-linked. N-linked (GlcNAc...) asparagine glycans are attached at residues N102, N161, and N199. C188 and C209 are disulfide-bonded. Residues 221-241 (WIVAIILIVSVLVVFLFLLGC) traverse the membrane as a helical segment. Residues 242-349 (FVVLWLIYKK…PKLLTSTSEV (108 aa)) lie on the Cytoplasmic side of the membrane. Residue S299 is modified to Phosphoserine. Residues 300–349 (EESEGSKQSPEDNCASEPPSDPGPRELESKDEAPSPPHDDPKLLTSTSEV) form a disordered region. The span at 322-341 (GPRELESKDEAPSPPHDDPK) shows a compositional bias: basic and acidic residues.

Belongs to the type II cytokine receptor family. Heterodimer with IFNLR1.

The protein localises to the membrane. Its function is as follows. Shared cell surface receptor required for the activation of five class 2 cytokines: IL10, IL22, IL26, IL28, and IFNL1. The IFNLR1/IL10RB dimer is a receptor for the cytokine ligands IFNL2 and IFNL3 and mediates their antiviral activity. The ligand/receptor complex stimulate the activation of the JAK/STAT signaling pathway leading to the expression of IFN-stimulated genes (ISG), which contribute to the antiviral state. This is Interleukin-10 receptor subunit beta (Il10rb) from Mus musculus (Mouse).